A 91-amino-acid chain; its full sequence is Probable Thioredoxin (91 aa).

The region spanning Met1–Ser91 is the Glutaredoxin domain. Cys12 and Cys15 are joined by a disulfide.

It belongs to the glutaredoxin family.

The protein localises to the cytoplasm. Functionally, acts to maintain redox homeostasis; functions as a protein disulfide reductase. The chain is Probable Thioredoxin from Archaeoglobus fulgidus (strain ATCC 49558 / DSM 4304 / JCM 9628 / NBRC 100126 / VC-16).